A 413-amino-acid chain; its full sequence is High zinc activated nuclear receptor protein (413 aa).

The segment at residues 11–86 is a DNA-binding region (nuclear receptor); it reads LGNCKICLQR…EGMKIELVQL (76 aa). 2 NR C4-type zinc fingers span residues 14–34 and 50–69; these read CKIC…CRAC and CKEK…CRSC. Residues 101–412 are required for zinc-binding; sequence SIDPLFTPNV…TSQCIVHTKN (312 aa). The NR LBD domain maps to 135–396; the sequence is QMTSGYAMFL…VCCKNFKEDA (262 aa).

The protein belongs to the nuclear hormone receptor family. As to expression, weakly expressed in intestinal cells in the absence of zinc supplementation. Upon zinc supplementation, accumulates in alimentary tract cells, and it is mainly expressed in the intestine.

The protein resides in the nucleus. Its subcellular location is the cytoplasm. Nuclear receptor transcription factor that binds to DNA enhancer elements to promote the transcription of genes required to maintain micronutrient homeostasis. Direct binding to its ligand zinc allows for nuclear accumulation and activation, which thereby induces the transcription of genes required to promote the storage and detoxification of excess dietary zinc. This in turn, allows for internal zinc levels to be detected and regulated. In Caenorhabditis elegans, this protein is High zinc activated nuclear receptor protein.